We begin with the raw amino-acid sequence, 280 residues long: Succinate dehydrogenase [ubiquinone] iron-sulfur subunit, mitochondrial (280 aa).

Residues 1-28 (MAAVVALSLRRRLPATTLGGACLQASRG) constitute a mitochondrion transit peptide. The 2Fe-2S ferredoxin-type domain occupies 40–133 (KKFAIYRWDP…VSKIYPLPHM (94 aa)). N6-acetyllysine occurs at positions 51 and 55. Residues C93, C98, C101, and C113 each contribute to the [2Fe-2S] cluster site. The interval 146–218 (FYAQYKSIEP…PAVLMQAYRW (73 aa)) is interaction with SDHAF1. Residues 176 to 206 (EREKLDGLYECILCACCSTSCPSYWWNGDKY) enclose the 4Fe-4S ferredoxin-type domain. Positions 186, 189, and 192 each coordinate [4Fe-4S] cluster. C196 contributes to the [3Fe-4S] cluster binding site. W201 is an a ubiquinone binding site. Residues C243 and C249 each contribute to the [3Fe-4S] cluster site. Residue C253 participates in [4Fe-4S] cluster binding.

Belongs to the succinate dehydrogenase/fumarate reductase iron-sulfur protein family. In terms of assembly, component of complex II composed of four subunits: the flavoprotein (FP) SDHA, iron-sulfur protein (IP) SDHB, and a cytochrome b560 composed of SDHC and SDHD. Interacts with SDHAF1; the interaction is required for iron-sulfur cluster incorporation into SDHB. As to quaternary structure, (Microbial infection) Interacts with JC virus small t antigen. It depends on [2Fe-2S] cluster as a cofactor. [3Fe-4S] cluster serves as cofactor. Requires [4Fe-4S] cluster as cofactor.

Its subcellular location is the mitochondrion inner membrane. The enzyme catalyses a quinone + succinate = fumarate + a quinol. The catalysed reaction is (R)-malate + a quinone = enol-oxaloacetate + a quinol. It carries out the reaction (S)-malate + a quinone = enol-oxaloacetate + a quinol. It functions in the pathway carbohydrate metabolism; tricarboxylic acid cycle; fumarate from succinate (eukaryal route): step 1/1. Its activity is regulated as follows. Enol-oxaloacetate inhibits the succinate dehydrogenase activity. Functionally, iron-sulfur protein (IP) subunit of the succinate dehydrogenase complex (mitochondrial respiratory chain complex II), responsible for transferring electrons from succinate to ubiquinone (coenzyme Q). SDH also oxidizes malate to the non-canonical enol form of oxaloacetate, enol-oxaloacetate. Enol-oxaloacetate, which is a potent inhibitor of the succinate dehydrogenase activity, is further isomerized into keto-oxaloacetate. The sequence is that of Succinate dehydrogenase [ubiquinone] iron-sulfur subunit, mitochondrial (SDHB) from Homo sapiens (Human).